The primary structure comprises 239 residues: Probable fimbrial chaperone YehC (239 aa).

The first 31 residues, 1-31, serve as a signal peptide directing secretion; the sequence is MAAIPWRPFNLRGIKMKGLLSLLIFSMVLPA.

It belongs to the periplasmic pilus chaperone family.

The protein localises to the periplasm. Functionally, part of the yehABCD fimbrial operon. Could contribute to adhesion to various surfaces in specific environmental niches. The chain is Probable fimbrial chaperone YehC (yehC) from Escherichia coli (strain K12).